Here is a 187-residue protein sequence, read N- to C-terminus: Ribonuclease M5 (187 aa).

The Toprim domain maps to 5-88 (KEVIVVEGKD…AFLPRKAGVP (84 aa)). Positions 11, 57, and 59 each coordinate Mg(2+).

It belongs to the ribonuclease M5 family. Mg(2+) is required as a cofactor.

It is found in the cytoplasm. It catalyses the reaction Endonucleolytic cleavage of RNA, removing 21 and 42 nucleotides, respectively, from the 5'- and 3'-termini of a 5S-rRNA precursor.. Functionally, required for correct processing of both the 5' and 3' ends of 5S rRNA precursor. Cleaves both sides of a double-stranded region yielding mature 5S rRNA in one step. This is Ribonuclease M5 from Lactiplantibacillus plantarum (strain ATCC BAA-793 / NCIMB 8826 / WCFS1) (Lactobacillus plantarum).